A 394-amino-acid chain; its full sequence is Elongation factor Tu 1 (394 aa).

The tr-type G domain maps to Lys-10–Glu-204. The segment at Gly-19–Thr-26 is G1. Gly-19–Thr-26 contacts GTP. Residue Thr-26 coordinates Mg(2+). The G2 stretch occupies residues Gly-60–Asn-64. A G3 region spans residues Asp-81 to Gly-84. GTP contacts are provided by residues Asp-81–His-85 and Asn-136–Asp-139. The segment at Asn-136 to Asp-139 is G4. The G5 stretch occupies residues Ser-174 to Leu-176.

This sequence belongs to the TRAFAC class translation factor GTPase superfamily. Classic translation factor GTPase family. EF-Tu/EF-1A subfamily. Monomer.

It localises to the cytoplasm. The enzyme catalyses GTP + H2O = GDP + phosphate + H(+). Functionally, GTP hydrolase that promotes the GTP-dependent binding of aminoacyl-tRNA to the A-site of ribosomes during protein biosynthesis. In Yersinia pestis bv. Antiqua (strain Nepal516), this protein is Elongation factor Tu 1.